An 868-amino-acid chain; its full sequence is Pentatricopeptide repeat-containing protein At2g27610 (868 aa).

PPR repeat units follow at residues 57-91 (DRESYISLLFGFSRDGRTQEAKRLFLNIHRLGMEM), 92-126 (DCSIFSSVLKVSATLCDELFGRQLHCQCIKFGFLD), 127-157 (DVSVGTSLVDTYMKGSNFKDGRKVFDEMKER), 158-192 (NVVTWTTLISGYARNSMNDEVLTLFMRMQNEGTQP), 193-227 (NSFTFAAALGVLAEEGVGGRGLQVHTVVVKNGLDK), 228-258 (TIPVSNSLINLYLKCGNVRKARILFDKTEVK), 259-293 (SVVTWNSMISGYAANGLDLEALGMFYSMRLNYVRL), 294-328 (SESSFASVIKLCANLKELRFTEQLHCSVVKYGFLF), 329-359 (DQNIRTALMVAYSKCTAMLDALRLFKEIGCV), 361-395 (NVVSWTAMISGFLQNDGKEEAVDLFSEMKRKGVRP), 396-426 (NEFTYSVILTALPVISPSEVHAQVVKTNYER), 427-457 (SSTVGTALLDAYVKLGKVEEAAKVFSGIDDK), 458-492 (DIVAWSAMLAGYAQTGETEAAIKMFGELTKGGIKP), 493-528 (NEFTFSSILNVCAATNASMGQGKQFHGFAIKSRLDS), 529-559 (SLCVSSALLTMYAKKGNIESAEEVFKRQREK), 560-594 (DLVSWNSMISGYAQHGQAMKALDVFKEMKKRKVKM), 595-625 (DGVTFIGVFAACTHAGLVEEGEKYFDIMVRD), and 631-661 (TKEHNSCMVDLYSRAGQLEKAMKVIENMPNP). Residues 666-741 (IWRTILAACR…EPGYSWIEVK (76 aa)) are type E motif. The segment at 742–772 (NKTYSFLAGDRSHPLKDQIYMKLEDLSTRLK) is type E(+) motif. The tract at residues 773–868 (DLGYEPDTSY…DGVCSCGDFW (96 aa)) is type DYW motif.

Belongs to the PPR family. PCMP-H subfamily.

In Arabidopsis thaliana (Mouse-ear cress), this protein is Pentatricopeptide repeat-containing protein At2g27610 (PCMP-H60).